Here is a 442-residue protein sequence, read N- to C-terminus: Glycoprotein endo-alpha-1,2-mannosidase-like protein (442 aa).

Residues 1–8 (MNRLRRKA) are Cytoplasmic-facing. Residues 9 to 29 (CVALLLFTLFIFGTMMGLRTL) form a helical; Signal-anchor for type II membrane protein membrane-spanning segment. At 30–442 (KPTDGFSDLA…FSKEKEQWLM (413 aa)) the chain is on the lumenal side.

This sequence belongs to the glycosyl hydrolase 99 family.

It is found in the golgi apparatus membrane. This Danio rerio (Zebrafish) protein is Glycoprotein endo-alpha-1,2-mannosidase-like protein (maneal).